Here is a 187-residue protein sequence, read N- to C-terminus: Biogenesis of lysosome-related organelles complex 1 subunit 5 (187 aa).

Positions 1-26 are disordered; the sequence is MSGGGTETPVGCEAAPGGGSKKRDSL. An N-acetylserine modification is found at S2. A coiled-coil region spans residues 154–186; the sequence is NKRAEVDEEHRKAMERLKEQYAEMEKDLAKFST.

This sequence belongs to the BLOC1S5 family. Interacts with BLOC1S4, DTNBP1/BLOC1S7 and PI4K2A. Component of the biogenesis of lysosome-related organelles complex 1 (BLOC-1) composed of BLOC1S1, BLOC1S2, BLOC1S3, BLOC1S4, BLOC1S5, BLOC1S6, DTNBP1/BLOC1S7 and SNAPIN/BLOC1S8. Octamer composed of one copy each BLOC1S1, BLOC1S2, BLOC1S3, BLOC1S4, BLOC1S5, BLOC1S6, DTNBP1/BLOC1S7 and SNAPIN/BLOC1S8. The BLOC-1 complex associates with the AP-3 protein complex and membrane protein cargos. Interacts with BLOC1S6.

Functionally, component of the BLOC-1 complex, a complex that is required for normal biogenesis of lysosome-related organelles (LRO), such as platelet dense granules and melanosomes. In concert with the AP-3 complex, the BLOC-1 complex is required to target membrane protein cargos into vesicles assembled at cell bodies for delivery into neurites and nerve terminals. The BLOC-1 complex, in association with SNARE proteins, is also proposed to be involved in neurite extension. Plays a role in intracellular vesicle trafficking. This is Biogenesis of lysosome-related organelles complex 1 subunit 5 from Homo sapiens (Human).